The following is a 572-amino-acid chain: Proline--tRNA ligase (572 aa).

Belongs to the class-II aminoacyl-tRNA synthetase family. ProS type 1 subfamily. As to quaternary structure, homodimer.

The protein resides in the cytoplasm. It catalyses the reaction tRNA(Pro) + L-proline + ATP = L-prolyl-tRNA(Pro) + AMP + diphosphate. In terms of biological role, catalyzes the attachment of proline to tRNA(Pro) in a two-step reaction: proline is first activated by ATP to form Pro-AMP and then transferred to the acceptor end of tRNA(Pro). As ProRS can inadvertently accommodate and process non-cognate amino acids such as alanine and cysteine, to avoid such errors it has two additional distinct editing activities against alanine. One activity is designated as 'pretransfer' editing and involves the tRNA(Pro)-independent hydrolysis of activated Ala-AMP. The other activity is designated 'posttransfer' editing and involves deacylation of mischarged Ala-tRNA(Pro). The misacylated Cys-tRNA(Pro) is not edited by ProRS. The protein is Proline--tRNA ligase of Hydrogenovibrio crunogenus (strain DSM 25203 / XCL-2) (Thiomicrospira crunogena).